Reading from the N-terminus, the 652-residue chain is Drebrin (652 aa).

An N-acetylalanine modification is found at Ala2. The ADF-H domain occupies 5–134 (GFAAHRLELL…DPGAIGQRLS (130 aa)). Composition is skewed to basic and acidic residues over residues 211-236 (MEQE…EEHR) and 288-298 (DNPREFFKQQE). Disordered regions lie at residues 211-350 (MEQE…YITC) and 371-652 (SAAG…GGGL). The segment covering 328–340 (SGPPSSSSSSSSP) has biased composition (low complexity). Residues 507–517 (PDTPAGPPVPP) show a composition bias toward pro residues. Acidic residues-rich tracts occupy residues 540-554 (QHEE…EEAT) and 640-652 (PLPE…GGGL).

As to expression, brain neurons.

It is found in the cytoplasm. It localises to the cell projection. The protein resides in the dendrite. The protein localises to the cell cortex. Its subcellular location is the cell junction. It is found in the growth cone. Actin cytoskeleton-organizing protein that plays a role in the formation of cell projections. Plays a role in dendritic spine morphogenesis and organization, including the localization of the dopamine receptor DRD1 to the dendritic spines. Involved in synaptic plasticity. The chain is Drebrin (DBN1) from Gallus gallus (Chicken).